Consider the following 239-residue polypeptide: Terpene cyclase idtB (239 aa).

A run of 5 helical transmembrane segments spans residues 20-40 (MADT…ALMI), 50-70 (CMAL…TIVY), 75-95 (RVEL…MVGA), 113-133 (AGFI…ALAM), and 138-158 (GLAY…GGLF). Residue Asn-164 is glycosylated (N-linked (GlcNAc...) asparagine). A helical membrane pass occupies residues 197–217 (EVFGWLASPLVLWSLVTFLLA).

The protein belongs to the paxB family.

Its subcellular location is the membrane. Its pathway is secondary metabolite biosynthesis. Functionally, terpene cyclase; part of the gene cluster that mediates the biosynthesis of paspalitrems, indole-diterpene (IDT) mycotoxins that are potent tremorgens in mammals. The geranylgeranyl diphosphate (GGPP) synthase idtG is proposed to catalyze the first step in IDT biosynthesis via catalysis of a series of iterative condensations of isopentenyl diphosphate (IPP) with dimethylallyl diphosphate (DMAPP), geranyl diphosphate (GPP), and farnesyl diphosphate (FPP), to form GGPP. Condensation of indole-3-glycerol phosphate with GGPP by the prenyltransferase idtC then forms 3-geranylgeranylindole (3-GGI). Epoxidation of the two terminal alkenes of the geranylgeranyl moiety by the FAD-dependent monooxygenase idtM, and cyclization by the terpene cyclase idtB then leads to the production of paspaline. The cytochrome P450 monooxygenase idtP then catalyzes oxidative elimination of the pendant methyl group at C-12 of paspaline and generates the C-10 ketone to yield 13-desoxypaxilline. The cytochrome P450 monooxygenase idtQ may catalyze the C-13 oxidation of 13-desoxypaxilline to afford paxilline. Considering that both paspalicine and paxilline were detected in C.paspali, idtQ also catalyzes the formation of paspalinine from 13-desoxypaxilline via paspalicine as an intermediate. Finally, the alpha-prenyltransferase idtF prenylates paspalinine at the C-20 or the C-21 positions to yield paspalitrems A and C, respectively. The hydroxylation of paspalitrem A at C-32 by a still unknown oxidase affords paspalitrem B. In Claviceps paspali (Rye ergot fungus), this protein is Terpene cyclase idtB.